A 90-amino-acid polypeptide reads, in one-letter code: UPF0335 protein RPD_1405 (90 aa).

This sequence belongs to the UPF0335 family.

This is UPF0335 protein RPD_1405 from Rhodopseudomonas palustris (strain BisB5).